Consider the following 81-residue polypeptide: Photosystem I iron-sulfur center (81 aa).

4Fe-4S ferredoxin-type domains follow at residues 2 to 31 (AHSV…MVPW) and 39 to 68 (IASA…VRVY). [4Fe-4S] cluster-binding residues include C11, C14, C17, C21, C48, C51, C54, and C58.

In terms of assembly, the eukaryotic PSI reaction center is composed of at least 11 subunits. The cofactor is [4Fe-4S] cluster.

The protein resides in the plastid. It localises to the chloroplast thylakoid membrane. The catalysed reaction is reduced [plastocyanin] + hnu + oxidized [2Fe-2S]-[ferredoxin] = oxidized [plastocyanin] + reduced [2Fe-2S]-[ferredoxin]. Its function is as follows. Apoprotein for the two 4Fe-4S centers FA and FB of photosystem I (PSI); essential for photochemical activity. FB is the terminal electron acceptor of PSI, donating electrons to ferredoxin. The C-terminus interacts with PsaA/B/D and helps assemble the protein into the PSI complex. Required for binding of PsaD and PsaE to PSI. PSI is a plastocyanin-ferredoxin oxidoreductase, converting photonic excitation into a charge separation, which transfers an electron from the donor P700 chlorophyll pair to the spectroscopically characterized acceptors A0, A1, FX, FA and FB in turn. This is Photosystem I iron-sulfur center from Physcomitrium patens (Spreading-leaved earth moss).